The chain runs to 122 residues: Large ribosomal subunit protein bL12 (122 aa).

This sequence belongs to the bacterial ribosomal protein bL12 family. Homodimer. Part of the ribosomal stalk of the 50S ribosomal subunit. Forms a multimeric L10(L12)X complex, where L10 forms an elongated spine to which 2 to 4 L12 dimers bind in a sequential fashion. Binds GTP-bound translation factors.

Its function is as follows. Forms part of the ribosomal stalk which helps the ribosome interact with GTP-bound translation factors. Is thus essential for accurate translation. The protein is Large ribosomal subunit protein bL12 of Histophilus somni (strain 129Pt) (Haemophilus somnus).